Consider the following 419-residue polypeptide: eIF5-mimic protein 2 (419 aa).

Met-1 is modified (N-acetylmethionine). Positions 1 to 15 (MNNQKQQKPTLSGQR) are enriched in polar residues. Residues 1–26 (MNNQKQQKPTLSGQRFKTRKRDEKER) are disordered. Phosphoserine is present on Ser-12. The 168-residue stretch at 247-414 (NQQTIGARKE…KNAEEESESE (168 aa)) folds into the W2 domain. A Glycyl lysine isopeptide (Lys-Gly) (interchain with G-Cter in SUMO2) cross-link involves residue Lys-368. Phosphoserine occurs at positions 411 and 413.

Belongs to the BZW family.

In terms of biological role, translation initiation regulator which represses repeat-associated non-AUG (RAN) initiated translation probably by acting as a competitive inhibitor of eukaryotic translation initiation factor 5 (EIF5) function. Enhances histone H4 gene transcription but does not seem to bind DNA directly. The chain is eIF5-mimic protein 2 (BZW1) from Homo sapiens (Human).